Reading from the N-terminus, the 61-residue chain is Temporin-ALi (61 aa).

An N-terminal signal peptide occupies residues Met-1–Cys-22. The propeptide occupies Glu-23–Arg-46. Leucine amide is present on Leu-59.

This sequence belongs to the frog skin active peptide (FSAP) family. Temporin subfamily. Expressed by the skin glands.

The protein resides in the secreted. Antimicrobial peptide with activity against Gram-positive and Gram-negative bacteria and against fungi. Has been tested against S.aureus (MIC=7.5 ug/mL), B.pumilus (MIC=7.5 ug/mL), B.cereus (MIC=75.0 ug/mL), E.coli (MIC=7.5 ug/mL), B.dysenteriae (MIC=20.0 ug/mL), A.cacoaceticus (MIC=60.0 ug/mL), P.aeruginosa (MIC=5.0 ug/mL) and C.albicans (MIC=5.0 ug/mL). Also shows a weak hemolytic activity. The protein is Temporin-ALi of Amolops loloensis (Lolokou Sucker Frog).